Here is a 262-residue protein sequence, read N- to C-terminus: Small ribosomal subunit protein eS1 (262 aa).

The protein belongs to the eukaryotic ribosomal protein eS1 family. In terms of assembly, component of the small ribosomal subunit. Mature ribosomes consist of a small (40S) and a large (60S) subunit. The 40S subunit contains about 32 different proteins and 1 molecule of RNA (18S). The 60S subunit contains about 42 different proteins and 3 molecules of RNA (28S, 5.8S and 5S).

It is found in the cytoplasm. Its function is as follows. Component of the ribosome, a large ribonucleoprotein complex responsible for the synthesis of proteins in the cell. The small ribosomal subunit (SSU) binds messenger RNAs (mRNAs) and translates the encoded message by selecting cognate aminoacyl-transfer RNA (tRNA) molecules. The large subunit (LSU) contains the ribosomal catalytic site termed the peptidyl transferase center (PTC), which catalyzes the formation of peptide bonds, thereby polymerizing the amino acids delivered by tRNAs into a polypeptide chain. The nascent polypeptides leave the ribosome through a tunnel in the LSU and interact with protein factors that function in enzymatic processing, targeting, and the membrane insertion of nascent chains at the exit of the ribosomal tunnel. The polypeptide is Small ribosomal subunit protein eS1 (Plasmodium falciparum (isolate 3D7)).